The following is a 461-amino-acid chain: MGVNVFGIINLEKPRKEKLEFREPFEVFKSIYSEYESSFLLESMESDTGLARYSFIGFEPEMIIRAREGVIEIDDGDSREEFDSKNPFEDLRGFLKMEKNSGGFCGGLVGYISYQAARFFDTIRLSEGDFPDFEFGLFLDGIMFNHLTGECSYISRHGNRLPDISPLLGDEVPTGTLGYRRERTLLSKRRYMDMVLEAKERIREGEIFQAVLSSATDYRLRGDRLAFYESLRRINPSPYMYHLKLGEREITGSSPEMLVRVEDRRIETFPIAGTRPRGRTEEEDGVIASDLLSDEKELAEHLMLVDLARNDIGRVSEFGSVEVPEYMTIKRFSHVQHILSHVTGKLRDGMDAVDALGAVFPAGTVSGAPKIRAMEIIESLEGVPRNAYAGALGYLSLNGNADFAITIRSMVCQGKTGRIQAGAGIVHDSIPEMEYLECQNKARALLKSMEMAGEQVDPDNR.

L-tryptophan is bound by residues Ser43 and 238–240 (PYM). 273–274 (GT) provides a ligand contact to chorismate. Glu300 provides a ligand contact to Mg(2+). Chorismate-binding positions include Tyr388, Arg408, 422-424 (GAG), and Gly424. Glu437 is a binding site for Mg(2+).

The protein belongs to the anthranilate synthase component I family. In terms of assembly, heterotetramer consisting of two non-identical subunits: a beta subunit (TrpG) and a large alpha subunit (TrpE). Requires Mg(2+) as cofactor.

It catalyses the reaction chorismate + L-glutamine = anthranilate + pyruvate + L-glutamate + H(+). Its pathway is amino-acid biosynthesis; L-tryptophan biosynthesis; L-tryptophan from chorismate: step 1/5. Feedback inhibited by tryptophan. In terms of biological role, part of a heterotetrameric complex that catalyzes the two-step biosynthesis of anthranilate, an intermediate in the biosynthesis of L-tryptophan. In the first step, the glutamine-binding beta subunit (TrpG) of anthranilate synthase (AS) provides the glutamine amidotransferase activity which generates ammonia as a substrate that, along with chorismate, is used in the second step, catalyzed by the large alpha subunit of AS (TrpE) to produce anthranilate. In the absence of TrpG, TrpE can synthesize anthranilate directly from chorismate and high concentrations of ammonia. The sequence is that of Anthranilate synthase component 1 (trpE) from Methanothermobacter marburgensis (strain ATCC BAA-927 / DSM 2133 / JCM 14651 / NBRC 100331 / OCM 82 / Marburg) (Methanobacterium thermoautotrophicum).